The chain runs to 152 residues: Allergen Asp f 15 (152 aa).

An N-terminal signal peptide occupies residues 1–19; it reads MKFTTPISLISLFVSSALA. 2 disulfide bridges follow: Cys53-Cys90 and Cys93-Cys148.

The protein belongs to the cerato-platanin family.

It is found in the secreted. This Aspergillus fumigatus (strain ATCC MYA-4609 / CBS 101355 / FGSC A1100 / Af293) (Neosartorya fumigata) protein is Allergen Asp f 15.